Reading from the N-terminus, the 1012-residue chain is Ubiquitin-activating enzyme E1 1 (1012 aa).

An ATP-binding site is contributed by Arg22. The residue at position 264 (Ser264) is a Phosphoserine. Residues Ala437 and Asp463 each coordinate ATP. Mg(2+) contacts are provided by Asp465 and Glu468. Positions 471, 474, 487, 513, 537, and 538 each coordinate ATP. Asp537 contacts Mg(2+). Residue Lys588 forms a Glycyl lysine isopeptide (Lys-Gly) (interchain with G-Cter in ubiquitin) linkage. Cys593 acts as the Glycyl thioester intermediate in catalysis. Ser903 carries the post-translational modification Phosphoserine.

It belongs to the ubiquitin-activating E1 family. Monomer. Interacts with the E2 ubiquitin-conjugating enzyme ubc4.

The protein localises to the cytoplasm. It is found in the nucleus. It catalyses the reaction ATP + ubiquitin + [E1 ubiquitin-activating enzyme]-L-cysteine = AMP + diphosphate + S-ubiquitinyl-[E1 ubiquitin-activating enzyme]-L-cysteine.. It participates in protein modification; protein ubiquitination. Ubiquitin transfer between the E1 ubiquitin-activating enzyme ptr3 and E2 ubiquitin-conjugating enzyme ubc4 is enhanced by the presence of magnesium and ATP, or adenylated ubiquitin. E1 ubiquitin-activating enzyme that catalyzes the first step in ubiquitin conjugation to mark cellular proteins for degradation through the ubiquitin-proteasome system. Activates ubiquitin by first adenylating its C-terminal glycine residue with ATP, and thereafter linking this residue to the side chain of a cysteine residue in E1, yielding a ubiquitin-E1 thioester and free AMP. The chain is Ubiquitin-activating enzyme E1 1 (ptr3) from Schizosaccharomyces pombe (strain 972 / ATCC 24843) (Fission yeast).